We begin with the raw amino-acid sequence, 90 residues long: Major mite allergen Der p 23 (90 aa).

An N-terminal signal peptide occupies residues 1-21 (MKFNIIIVFISLAILVHSSYA). The tract at residues 22 to 42 (ANDNDDDPTTTVHPTTTEQPD) is disordered. The span at 30-39 (TTTVHPTTTE) shows a compositional bias: low complexity. The Chitin-binding type-2 domain occupies 44–90 (KFECPSRFGYFADPKDPHKFYICSNWEAVHKDCPGNTRWNEDEETCT). Intrachain disulfides connect cysteine 47-cysteine 66 and cysteine 76-cysteine 89. Positions 52 to 90 (GYFADPKDPHKFYICSNWEAVHKDCPGNTRWNEDEETCT) are important for IgE-binding.

Monomer. Expressed in epithelial cells of the midgut.

It is found in the secreted. It localises to the endoplasmic reticulum. The protein localises to the cytoplasmic vesicle. Functionally, does not bind chitin in vitro. This chain is Major mite allergen Der p 23, found in Dermatophagoides pteronyssinus (European house dust mite).